A 428-amino-acid chain; its full sequence is Histidine--tRNA ligase (428 aa).

Belongs to the class-II aminoacyl-tRNA synthetase family.

Its subcellular location is the cytoplasm. It catalyses the reaction tRNA(His) + L-histidine + ATP = L-histidyl-tRNA(His) + AMP + diphosphate + H(+). The polypeptide is Histidine--tRNA ligase (Sulfolobus acidocaldarius (strain ATCC 33909 / DSM 639 / JCM 8929 / NBRC 15157 / NCIMB 11770)).